Consider the following 321-residue polypeptide: PI-PLC X domain-containing protein 3 (321 aa).

A PI-PLC X-box domain is found at 22-197 (SIHSIPLTNL…DYQVLVFYHS (176 aa)). Catalysis depends on residues His37 and His114.

The sequence is that of PI-PLC X domain-containing protein 3 (PLCXD3) from Bos taurus (Bovine).